The sequence spans 594 residues: MSGTILENLSGRKLSILVATLLLCQVLCFLLGGLYAPLPAGHVTVLGSLCREDHARQNDTSFLLYSRGAGACIPVTREEVEQDSTKMANELVHVFQMPLPRDLRDLDYSRWQQNLIGVLQVEFGYDSSSELREPPRELQLTIDMRLAYRNKGDPDNGWKLYAHGVEHRYLDCVTSHVGPTETLYSCDMIPLFELGALHHSFYLLNLRFPLDTPSQMNLQFGHMHDLTLTAIHQNGGFTQIWLLLKTMLFPFVVGIMIWFWRRVHLLQRSPALLEYMLIYLGAALTFLNLPLEYLSLVYEMPYMLLLSDIRQGIFYAMLLTFWLVFAGEHMLIQDAPNKSTIRSRYWKHLSAVVVGCISLFVFDICERGVQLRNPFYSIWTTPLGAKVAMTFIVLAGVSAAIYFLFLCYMIWKVFRNIGDKRTSLPSMSQARRLHYEVPLDQKVEDWAGIVYFYTKAFFFQLHKANESKGLIYRFKFLMLATLVCAALTVAGFIMGQMAEGQWDWNDNVAIQPTSAFLTGVYGMWNIYIFALLILYAPSHKQWPTMHHSDETTQSNENIVASAASEEIEFSHLPSDSNPSEISSLTSFTRKVAFD.

At 1 to 13 (MSGTILENLSGRK) the chain is on the cytoplasmic side. The helical transmembrane segment at 14-34 (LSILVATLLLCQVLCFLLGGL) threads the bilayer. At 35-239 (YAPLPAGHVT…AIHQNGGFTQ (205 aa)) the chain is on the lumenal side. Asparagine 58 is a glycosylation site (N-linked (GlcNAc...) asparagine). The helical transmembrane segment at 240 to 260 (IWLLLKTMLFPFVVGIMIWFW) threads the bilayer. Residues 261–270 (RRVHLLQRSP) are Cytoplasmic-facing. Residues 271 to 291 (ALLEYMLIYLGAALTFLNLPL) traverse the membrane as a helical segment. At 292 to 311 (EYLSLVYEMPYMLLLSDIRQ) the chain is on the lumenal side. A helical membrane pass occupies residues 312–332 (GIFYAMLLTFWLVFAGEHMLI). Topologically, residues 333–344 (QDAPNKSTIRSR) are cytoplasmic. Residues 345–365 (YWKHLSAVVVGCISLFVFDIC) traverse the membrane as a helical segment. Residues 366–390 (ERGVQLRNPFYSIWTTPLGAKVAMT) lie on the Lumenal side of the membrane. The helical transmembrane segment at 391-411 (FIVLAGVSAAIYFLFLCYMIW) threads the bilayer. The Cytoplasmic portion of the chain corresponds to 412–473 (KVFRNIGDKR…ANESKGLIYR (62 aa)). The helical transmembrane segment at 474 to 494 (FKFLMLATLVCAALTVAGFIM) threads the bilayer. At 495-514 (GQMAEGQWDWNDNVAIQPTS) the chain is on the lumenal side. The helical transmembrane segment at 515–535 (AFLTGVYGMWNIYIFALLILY) threads the bilayer. The Cytoplasmic segment spans residues 536-594 (APSHKQWPTMHHSDETTQSNENIVASAASEEIEFSHLPSDSNPSEISSLTSFTRKVAFD). The interval 571-594 (HLPSDSNPSEISSLTSFTRKVAFD) is disordered. Polar residues predominate over residues 573–588 (PSDSNPSEISSLTSFT).

This sequence belongs to the wntless family. In terms of assembly, interacts with wg; in the Golgi. Interacts with Vps35, a component of the retromer complex; wls stability is regulated by Vps35. As to expression, ubiquitously expressed in the wing imaginal disk, increased expression is observed in a stripe at the dorso-ventral boundary and other regions of the wing disk that express wg. Also expresses in the leg imaginal disk. During larval development, expression is seen in both motorneurons and muscle.

It is found in the presynaptic cell membrane. The protein resides in the postsynaptic cell membrane. It localises to the cell membrane. The protein localises to the endosome membrane. Its subcellular location is the endoplasmic reticulum membrane. It is found in the golgi apparatus membrane. A segment polarity gene required for wingless (wg)-dependent patterning processes, acting in both wg-sending cells and wg-target cells. In non-neuronal cells wls directs wg secretion. The wls traffic loop encompasses the Golgi, the cell surface, an endocytic compartment and a retrograde route leading back to the Golgi, and involves clathrin-mediated endocytosis and the retromer complex (a conserved protein complex consisting of Vps35 and Vps26). In neuronal cells (the larval motorneuron NMJ), the wg signal moves across the synapse via the release of wls-containing exosome-like vesicles. Postsynaptic wls is required for the trafficking of fz2 through the fz2-interacting protein Grip. The protein is Protein wntless of Drosophila melanogaster (Fruit fly).